A 309-amino-acid polypeptide reads, in one-letter code: Olfactory receptor 5H2 (309 aa).

Residues 1–28 (MEQDNTTLLTEFVLTGLTYQPEWKMPLF) lie on the Extracellular side of the membrane. N5 carries N-linked (GlcNAc...) asparagine glycosylation. A helical transmembrane segment spans residues 29-49 (LVFLVIYLITIVWNLGLIALI). Residues 50–56 (WNDPQLH) lie on the Cytoplasmic side of the membrane. A helical transmembrane segment spans residues 57 to 77 (IPMYFFLGSLAFVDAWISSTV). At 78–97 (TPKMLVNFLAKNRMISLSEC) the chain is on the extracellular side. C97 and C179 form a disulfide bridge. The chain crosses the membrane as a helical span at residues 98–118 (MIQFFSFAFGGTTECFLLATM). Topologically, residues 119–143 (AYDRYVAICKPLLYPVIMNNSLCIR) are cytoplasmic. A helical transmembrane segment spans residues 144–164 (LLAFSFLGGFLHALIHEVLIF). Residues 165–193 (RLTFCNSNIIHHFYCDIIPLFMISCTDPS) lie on the Extracellular side of the membrane. A helical membrane pass occupies residues 194-214 (INFLMVFILSGSIQVFTIVTV). The Cytoplasmic portion of the chain corresponds to 215–239 (LNSYTFALFTILKKKSVRGVRKAFS). The helical transmembrane segment at 240-260 (TCGAHLLSVSLYYGPLIFMYL) threads the bilayer. Topologically, residues 261 to 271 (RPASPQADDQD) are extracellular. Residues 272-292 (MIDSVFYTIIIPLLNPIIYSL) form a helical membrane-spanning segment. Residues 293 to 309 (RNKQVIDSFTKMVKRNV) are Cytoplasmic-facing.

The protein belongs to the G-protein coupled receptor 1 family.

Its subcellular location is the cell membrane. Its function is as follows. Odorant receptor. This Homo sapiens (Human) protein is Olfactory receptor 5H2 (OR5H2).